The following is a 252-amino-acid chain: Triosephosphate isomerase (252 aa).

8 to 10 (NWK) contacts substrate. The Electrophile role is filled by histidine 95. Catalysis depends on glutamate 167, which acts as the Proton acceptor. Residues glycine 173, serine 212, and 233-234 (GG) each bind substrate.

Belongs to the triosephosphate isomerase family. As to quaternary structure, homodimer.

It is found in the cytoplasm. The enzyme catalyses D-glyceraldehyde 3-phosphate = dihydroxyacetone phosphate. The protein operates within carbohydrate biosynthesis; gluconeogenesis. It participates in carbohydrate degradation; glycolysis; D-glyceraldehyde 3-phosphate from glycerone phosphate: step 1/1. Its function is as follows. Involved in the gluconeogenesis. Catalyzes stereospecifically the conversion of dihydroxyacetone phosphate (DHAP) to D-glyceraldehyde-3-phosphate (G3P). This chain is Triosephosphate isomerase, found in Lawsonia intracellularis (strain PHE/MN1-00).